The following is a 75-amino-acid chain: UPF0270 protein PP_1747 (75 aa).

The protein belongs to the UPF0270 family.

The sequence is that of UPF0270 protein PP_1747 from Pseudomonas putida (strain ATCC 47054 / DSM 6125 / CFBP 8728 / NCIMB 11950 / KT2440).